The sequence spans 1796 residues: Non-reducing polyketide synthase nscA (1796 aa).

An N-terminal acylcarrier protein transacylase domain (SAT) region spans residues 18–256 (DDLKDLFRRL…PLPVYDGLCH (239 aa)). Residues 392–825 (SSKLAIVGMA…GGNTTLLLED (434 aa)) enclose the Ketosynthase family 3 (KS3) domain. Active-site for beta-ketoacyl synthase activity residues include cysteine 565, histidine 700, and histidine 743. The tract at residues 931 to 1251 (FTGQGAYYSG…SLVTLHLAGL (321 aa)) is malonyl-CoA:ACP transacylase (MAT) domain. The product template (PT) domain stretch occupies residues 1317–1636 (TSLVHQITAE…RLLMDRFFSP (320 aa)). Residues 1321–1457 (HQITAETVEA…ATVRFEDPVA (137 aa)) are N-terminal hotdog fold. A PKS/mFAS DH domain is found at 1321–1631 (HQITAETVEA…FRRVPRLLMD (311 aa)). Histidine 1353 serves as the catalytic Proton acceptor; for dehydratase activity. A C-terminal hotdog fold region spans residues 1485-1631 (ASRLSKPLAY…FRRVPRLLMD (147 aa)). Aspartate 1542 (proton donor; for dehydratase activity) is an active-site residue. Residues 1688–1720 (TPESTPPLAPSSESSTPKESPIATPPESERADP) form a disordered region. The segment covering 1697–1708 (PSSESSTPKESP) has biased composition (low complexity). The Carrier domain maps to 1719 to 1796 (DPMDNMVSQC…EMTAWIEEYC (78 aa)). Residue serine 1756 is modified to O-(pantetheine 4'-phosphoryl)serine.

Pantetheine 4'-phosphate serves as cofactor.

The protein operates within secondary metabolite biosynthesis. In terms of biological role, non-reducing polyketide synthase; part of the gene cluster that mediates the biosynthesis of neosartoricin B, a prenylated anthracenone that probably exhibits T-cell antiproliferative activity, suggestive of a physiological role as an immunosuppressive agent. The non-reducing polyketide synthase nscA probably synthesizes and cyclizes the decaketide backbone. The hydrolase nscB then mediates the product release through hydrolysis followed by spontaneous decarboxylation. The prenyltransferase nscD catalyzes the addition of the dimethylallyl group to the aromatic C5. The FAD-dependent monooxygenase nscC is then responsible for the stereospecific hydroxylation at C2. Neosartoricin B can be converted into two additional compounds neosartoricins C and D. Neosartoricin C is a spirocyclic compound that is cyclized through the attack of C3 hydroxyl on C14, followed by dehydration. On the other hand, neosartoricin D is a further cyclized compound in which attack of C2 on C14 in neosartoricin C results in the formation of the acetal-containing dioxabicyclo-octanone ring. Both of these compounds are novel and possibly represent related metabolites of the gene cluster. The polypeptide is Non-reducing polyketide synthase nscA (Arthroderma otae (strain ATCC MYA-4605 / CBS 113480) (Microsporum canis)).